A 610-amino-acid chain; its full sequence is MQQEAAQRESEELQHVQWRPRAVSGWGVPQLLWYLVFLQPIITEVHLRRRNVQFLFIRFSAWQYAGTDKLWAGLVTTLCEGIRRHYGALPFSVYSVLGNKPATRQDCCQSEWHCRRRVCLGLLALLAALGLGVGLLYLSLGGHALGHGSPSGSLLKVFGGAATTLSGSGLLMAVYSVGKHLFVSQRKKIERLVSREKFGSQLGFMCEVKKEVELLTDFLCFLEIYQRRRLRVVLEVTGLDTCYPERVVGVLNAINTLLSDSHAPFIFILVVDPSILAACLESAGNMKGTADNGYLFLNRTVTLPFSVPIMGRRTKLQFLHDAVQSRDDLLYREMTRKPWLPGDAGGESAQLLAVQAQAGTERGQGRIDDEAARRIQEALFCLHDERDCLYEYVPDNVVSMRRIVNTVPITVRLLQQQQQQGDFGGPTPRQAVAWVVLANQWPCRLSWALQCLEDRQQTGGAPEGRARLWDVFRDNSRELHTMTKALQNVLDLDGDPELFERFLGADFPFTVAEAQSLLRCTVNLDHSIRRRMGLIRAVSALKPPSPPKSPTRDTPHAAHRANSASRAPPSGRASGQAGEGHHTGDLAHRGKLWPVACALFRPGQSSPGGP.

In terms of domain architecture, KAP NTPase spans 1-414 (MQQEAAQRES…NTVPITVRLL (414 aa)). A run of 3 helical transmembrane segments spans residues 22–42 (AVSG…QPII), 118–138 (VCLG…LLYL), and 157–177 (VFGG…VYSV). Residues 540–587 (ALKPPSPPKSPTRDTPHAAHRANSASRAPPSGRASGQAGEGHHTGDLA) are disordered. The segment covering 560 to 575 (RANSASRAPPSGRASG) has biased composition (low complexity).

Its subcellular location is the membrane. This is NTPase KAP family P-loop domain-containing protein 1 (NKPD1) from Homo sapiens (Human).